A 355-amino-acid polypeptide reads, in one-letter code: Anthranilate phosphoribosyltransferase (355 aa).

Residues G91, 94 to 95 (GD), T99, 101 to 104 (NIST), 119 to 127 (KHGNRAMSS), and A131 each bind 5-phospho-alpha-D-ribose 1-diphosphate. G91 is a binding site for anthranilate. S103 is a binding site for Mg(2+). N122 is an anthranilate binding site. Residue R177 coordinates anthranilate. Positions 234 and 235 each coordinate Mg(2+).

Belongs to the anthranilate phosphoribosyltransferase family. Homodimer. Mg(2+) is required as a cofactor.

The catalysed reaction is N-(5-phospho-beta-D-ribosyl)anthranilate + diphosphate = 5-phospho-alpha-D-ribose 1-diphosphate + anthranilate. It functions in the pathway amino-acid biosynthesis; L-tryptophan biosynthesis; L-tryptophan from chorismate: step 2/5. In terms of biological role, participates in the tryptophan-dependent indole-3-acetic acid production, which is a phytohormone released by A.brasilense. Functionally, catalyzes the transfer of the phosphoribosyl group of 5-phosphorylribose-1-pyrophosphate (PRPP) to anthranilate to yield N-(5'-phosphoribosyl)-anthranilate (PRA). This is Anthranilate phosphoribosyltransferase from Azospirillum brasilense.